A 688-amino-acid polypeptide reads, in one-letter code: Glycine--tRNA ligase beta subunit (688 aa).

It belongs to the class-II aminoacyl-tRNA synthetase family. As to quaternary structure, tetramer of two alpha and two beta subunits.

Its subcellular location is the cytoplasm. It carries out the reaction tRNA(Gly) + glycine + ATP = glycyl-tRNA(Gly) + AMP + diphosphate. This chain is Glycine--tRNA ligase beta subunit, found in Aliivibrio salmonicida (strain LFI1238) (Vibrio salmonicida (strain LFI1238)).